Consider the following 360-residue polypeptide: Aminomethyltransferase (360 aa).

This sequence belongs to the GcvT family. In terms of assembly, the glycine cleavage system is composed of four proteins: P, T, L and H.

The catalysed reaction is N(6)-[(R)-S(8)-aminomethyldihydrolipoyl]-L-lysyl-[protein] + (6S)-5,6,7,8-tetrahydrofolate = N(6)-[(R)-dihydrolipoyl]-L-lysyl-[protein] + (6R)-5,10-methylene-5,6,7,8-tetrahydrofolate + NH4(+). The glycine cleavage system catalyzes the degradation of glycine. The protein is Aminomethyltransferase of Pseudoalteromonas translucida (strain TAC 125).